We begin with the raw amino-acid sequence, 124 residues long: Superoxide reductase (124 aa).

Fe cation-binding residues include Glu14, His16, His41, His47, Cys111, and His114.

The protein belongs to the desulfoferrodoxin family. Homotetramer. Fe cation serves as cofactor.

The catalysed reaction is reduced [rubredoxin] + superoxide + 2 H(+) = oxidized [rubredoxin] + H2O2. Functionally, uses electrons from reduced NADP, by way of rubredoxin and an oxidoreductase, to catalyze the reduction of superoxide to hydrogen peroxide. The polypeptide is Superoxide reductase (sorA) (Pyrococcus furiosus (strain ATCC 43587 / DSM 3638 / JCM 8422 / Vc1)).